The primary structure comprises 346 residues: Holliday junction branch migration complex subunit RuvB (346 aa).

Residues 1 to 181 (MSDRNPLIDA…FGIPVRLNFY (181 aa)) form a large ATPase domain (RuvB-L) region. ATP contacts are provided by residues Leu-20, Arg-21, Gly-62, Lys-65, Thr-66, Thr-67, 128-130 (EDF), Arg-171, Tyr-181, and Arg-218. Thr-66 is a binding site for Mg(2+). The small ATPAse domain (RuvB-S) stretch occupies residues 182–252 (TVEELEYIVR…IADEALSRLE (71 aa)). A head domain (RuvB-H) region spans residues 255–346 (NRGLDQLDRR…SQYGLFMEDE (92 aa)). Residues Arg-291, Arg-310, and Arg-315 each coordinate DNA.

This sequence belongs to the RuvB family. Homohexamer. Forms an RuvA(8)-RuvB(12)-Holliday junction (HJ) complex. HJ DNA is sandwiched between 2 RuvA tetramers; dsDNA enters through RuvA and exits via RuvB. An RuvB hexamer assembles on each DNA strand where it exits the tetramer. Each RuvB hexamer is contacted by two RuvA subunits (via domain III) on 2 adjacent RuvB subunits; this complex drives branch migration. In the full resolvosome a probable DNA-RuvA(4)-RuvB(12)-RuvC(2) complex forms which resolves the HJ.

Its subcellular location is the cytoplasm. The enzyme catalyses ATP + H2O = ADP + phosphate + H(+). In terms of biological role, the RuvA-RuvB-RuvC complex processes Holliday junction (HJ) DNA during genetic recombination and DNA repair, while the RuvA-RuvB complex plays an important role in the rescue of blocked DNA replication forks via replication fork reversal (RFR). RuvA specifically binds to HJ cruciform DNA, conferring on it an open structure. The RuvB hexamer acts as an ATP-dependent pump, pulling dsDNA into and through the RuvAB complex. RuvB forms 2 homohexamers on either side of HJ DNA bound by 1 or 2 RuvA tetramers; 4 subunits per hexamer contact DNA at a time. Coordinated motions by a converter formed by DNA-disengaged RuvB subunits stimulates ATP hydrolysis and nucleotide exchange. Immobilization of the converter enables RuvB to convert the ATP-contained energy into a lever motion, pulling 2 nucleotides of DNA out of the RuvA tetramer per ATP hydrolyzed, thus driving DNA branch migration. The RuvB motors rotate together with the DNA substrate, which together with the progressing nucleotide cycle form the mechanistic basis for DNA recombination by continuous HJ branch migration. Branch migration allows RuvC to scan DNA until it finds its consensus sequence, where it cleaves and resolves cruciform DNA. In Brucella suis (strain ATCC 23445 / NCTC 10510), this protein is Holliday junction branch migration complex subunit RuvB.